A 591-amino-acid chain; its full sequence is MKKISLPKISIRPVIDGRRMGVRESLEEQTMNMAKATATLLTEKLRHACGAAVECVISDTCIAGMAEAAACEEKFSIQNVGLTITVTPCWCYGSETIDMDPTRPKAIWGFNGTERPGAVYLAAALAVHSQKGIPAFSIYGHDVQDADDTSIPADVEEKLLRFARAGLAVASMKGKSYLSLGGVSMGIAGSIVDHNFFESWLGMKVQAVDMTELRRRIDQKIYDEAELEMALTWADKNFRYGEDENNKQYQRNAEQSRAVLRESLLMAMCIRDMMQGNSKLADISRVEESLGYNAIAAGFQGQRHWTDQYPNGDTAEAILNSSFDWNGVREPLVVATENDSLNGVAMLMGHQLTGTAQVFADVRTYWSPEAIERVTGHKLDGLAEHGIIHLINSGSAALDGSCKQRDSEGNPTMKPHWKISQQEADACLAATEWCPAIHEYFRGGGYSSRFLTEGGVPFTMTRVNIIKGLGPVLQIAEGWSVELPKDVHDILNKRTNSTWPTTWFAPRLTGKGPFTDVYSVMANWGANHGVLTIGHVGADFITLAPMLRIPVCMHNVEETKVYRPSAWAAHGMDIEGQDYRACQNYGPLYKR.

Catalysis depends on proton acceptor residues Glu337 and Asp361. The Mn(2+) site is built by Glu337, Asp361, and His528.

It belongs to the L-fucose isomerase family. As to quaternary structure, homohexamer. Requires Mn(2+) as cofactor.

The protein localises to the cytoplasm. The catalysed reaction is L-fucose = L-fuculose. The protein operates within carbohydrate degradation; L-fucose degradation; L-lactaldehyde and glycerone phosphate from L-fucose: step 1/3. Functionally, converts the aldose L-fucose into the corresponding ketose L-fuculose. The chain is L-fucose isomerase from Shigella dysenteriae serotype 1 (strain Sd197).